A 457-amino-acid polypeptide reads, in one-letter code: UPF0210 protein Sfum_2948 (457 aa).

It belongs to the UPF0210 family. In terms of assembly, homodimer.

The polypeptide is UPF0210 protein Sfum_2948 (Syntrophobacter fumaroxidans (strain DSM 10017 / MPOB)).